The primary structure comprises 333 residues: MPQPPKRPRKPAPAAVKTAPAKGELHPRNRHQGRYDFPALIKVSPELGDFVITNPYGKPSIDFANPAAVKVFNRALLAQYYGIRHWDIPDGYLCPPIPGRADYLHNLADLLATDNDGQIPRGAGIHALDIGVGANCIYPLIGHCEYGWHFIGADIAPAALASARAIVAANPQLAGGIELRQQANAEQIFLGLLQADERVDLTLCNPPFHASADEATRGSTRKWRNLGKLDPRRKLPVLNFGGQAAELWCPGGEAAFLKRMASESAQVAGQVLWFSSLVSKGSNVELLQGWLAKAGAAEVRILGMSQGQKQSRLVAWTFKDGEARGAWRQSRWR.

A compositionally biased stretch (basic residues) spans methionine 1–lysine 10. The interval methionine 1 to histidine 31 is disordered. Residues alanine 12–lysine 22 show a composition bias toward low complexity.

It belongs to the methyltransferase superfamily. METTL16/RlmF family.

It localises to the cytoplasm. The catalysed reaction is adenosine(1618) in 23S rRNA + S-adenosyl-L-methionine = N(6)-methyladenosine(1618) in 23S rRNA + S-adenosyl-L-homocysteine + H(+). Specifically methylates the adenine in position 1618 of 23S rRNA. The chain is Ribosomal RNA large subunit methyltransferase F from Ectopseudomonas mendocina (strain ymp) (Pseudomonas mendocina).